A 228-amino-acid chain; its full sequence is UPF0173 metal-dependent hydrolase lin1612 (228 aa).

Belongs to the UPF0173 family.

This chain is UPF0173 metal-dependent hydrolase lin1612, found in Listeria innocua serovar 6a (strain ATCC BAA-680 / CLIP 11262).